Reading from the N-terminus, the 609-residue chain is MTLEATAIEATAIEATGIEATGITATAIEPTPRRSPGSSWLLCGGCGTMLYERRFAREGRVCADCSWHAPMTIQQRLDLLLDADSARPVDVPAIDGDPLEFTDTRPYRDRLRDARASTGLDEAAACVRGTIDGNPVVVVVMDFRFLGGSLGATVGEVFTRGAELALRERTPLLTVTASGGARMQEGAIALMQMAKTSQALGQLDEAGILTVSLITDPTFGGVAASFATLADVIIAEPGARLGFAGRRVIEQTIRQTLPEDFQTAEFLLTHGVVDLISPRRELRANLARLLSVSSRRADGIPRQAGRPDRAVVTDPEQLARRDAWESVRAARRLGRPTTLDYAAMILEDFTELRGDRMSADCPALVAGLGRLDGVPVAVLGTQKGHTADELRYRNFGMPTPAGYRKSARVMRLAAKLGLPVITLIDTAGAYPGVEAEEQAQAVAIAENLRLMAGLPVPVVAVVTGEGGSGGALALAFADRVLMCANAVYSVISAEGCAAILWKNPAAAPTAAAALRVDARELLRLGVVDGVIPEPDGGADADPAGTAARLREALRGALADLLPLDQMNLVTRRRARFRQFGVATPAPATAPAASDDAHESQTDRSVEATR.

The tract at residues 1 to 271 (MTLEATAIEA…QTAEFLLTHG (271 aa)) is acetyl-coenzyme A carboxylase carboxyl transferase subunit beta. Residues 39-308 (SWLLCGGCGT…GIPRQAGRPD (270 aa)) form the CoA carboxyltransferase N-terminal domain. Residues 39-559 (SWLLCGGCGT…REALRGALAD (521 aa)) are carboxyltransferase. Cys-43, Cys-46, Cys-62, and Cys-65 together coordinate Zn(2+). The segment at 43-65 (CGGCGTMLYERRFAREGRVCADC) adopts a C4-type zinc-finger fold. Positions 272 to 582 (VVDLISPRRE…RARFRQFGVA (311 aa)) are acetyl-coenzyme A carboxylase carboxyl transferase subunit alpha. Residues 314-559 (DPEQLARRDA…REALRGALAD (246 aa)) form the CoA carboxyltransferase C-terminal domain. A compositionally biased stretch (low complexity) spans 582–592 (ATPAPATAPAA). The tract at residues 582 to 609 (ATPAPATAPAASDDAHESQTDRSVEATR) is disordered. Positions 594-609 (DDAHESQTDRSVEATR) are enriched in basic and acidic residues.

It in the N-terminal section; belongs to the AccD/PCCB family. The protein in the C-terminal section; belongs to the AccA family. As to quaternary structure, acetyl-CoA carboxylase is a heterotetramer composed of biotin carboxyl carrier protein (AccB), biotin carboxylase (AccC) and two subunits of ACCase subunit beta/alpha. The cofactor is Zn(2+).

Its subcellular location is the cytoplasm. The catalysed reaction is N(6)-carboxybiotinyl-L-lysyl-[protein] + acetyl-CoA = N(6)-biotinyl-L-lysyl-[protein] + malonyl-CoA. It participates in lipid metabolism; malonyl-CoA biosynthesis; malonyl-CoA from acetyl-CoA: step 1/1. In terms of biological role, component of the acetyl coenzyme A carboxylase (ACC) complex. Biotin carboxylase (BC) catalyzes the carboxylation of biotin on its carrier protein (BCCP) and then the CO(2) group is transferred by the transcarboxylase to acetyl-CoA to form malonyl-CoA. The protein is Acetyl-coenzyme A carboxylase carboxyl transferase subunits beta/alpha (accD) of Frankia alni (strain DSM 45986 / CECT 9034 / ACN14a).